Consider the following 130-residue polypeptide: Small ribosomal subunit protein uS9 (130 aa).

The disordered stretch occupies residues 102–130 (GFLTRDPRMKERKKYGLKKARRAPQFSKR). The span at 111–130 (KERKKYGLKKARRAPQFSKR) shows a compositional bias: basic residues.

It belongs to the universal ribosomal protein uS9 family.

This chain is Small ribosomal subunit protein uS9, found in Clostridium novyi (strain NT).